A 646-amino-acid chain; its full sequence is Pentatricopeptide repeat-containing protein At5g48910 (646 aa).

The interval 1–24 is disordered; it reads MNPTQTLFSPGGNSPASSPASHPS. Residues 9 to 24 are compositionally biased toward low complexity; the sequence is SPGGNSPASSPASHPS. 11 PPR repeats span residues 54-88, 89-126, 127-161, 162-197, 207-237, 238-272, 273-307, 308-338, 339-373, 374-409, and 410-440; these read DTLAAAEILRFCATSDLHHRDLDYAHKIFNQMPQR, NCFSWNTIIRGFSESDEDKALIAITLFYEMMSDEFVEP, NRFTFPSVLKACAKTGKIQEGKQIHGLALKYGFGG, DEFVMSNLVRMYVMCGFMKDARVLFYKNIIEKDMVV, EIVLWNVMIDGYMRLGDCKAARMLFDKMRQR, SVVSWNTMISGYSLNGFFKDAVEVFREMKKGDIRP, NYVTLVSVLPAISRLGSLELGEWLHLYAEDSGIRI, DDVLGSALIDMYSKCGIIEKAIHVFERLPRE, NVITWSAMINGFAIHGQAGDAIDCFCKMRQAGVRP, SDVAYINLLTACSHGGLVEEGRRYFSQMVSVDGLEP, and RIEHYGCMVDLLGRSGLLDEAEEFILNMPIK. The segment at 445 to 520 is type E motif; sequence IWKALLGACR…DPGCSLIDID (76 aa). Residues 521 to 551 are type E(+) motif; it reads GVLHEFVVEDDSHPKAKEINSMLVEISDKLR. A type DYW motif region spans residues 552–646; sequence LAGYRPITTQ…DGSCSCMDYW (95 aa).

It belongs to the PPR family. PCMP-H subfamily.

The polypeptide is Pentatricopeptide repeat-containing protein At5g48910 (PCMP-H38) (Arabidopsis thaliana (Mouse-ear cress)).